A 219-amino-acid chain; its full sequence is Epididymal secretory glutathione peroxidase (219 aa).

Positions 1–21 are cleaved as a signal peptide; sequence MTVQLGAFYLFPLFMAGFVQT. The active site involves cysteine 71.

It belongs to the glutathione peroxidase family. As to quaternary structure, homotetramer. In terms of tissue distribution, proximal caput epididymis.

The protein resides in the secreted. It carries out the reaction 2 glutathione + H2O2 = glutathione disulfide + 2 H2O. In terms of biological role, may constitute a glutathione peroxidase-like protective system against peroxide damage in sperm membrane lipids. Since the purified porcine enzyme has very little activity towards hydrogen peroxide or organic hydroperoxides the protective effect is not likely to be exerted by its enzymatic activity. Instead, may protect sperm from premature acrosome reaction in the epididymis by binding to lipid peroxides, which might otherwise interact with phospholipase A2 and induce the acrosome reaction. This is Epididymal secretory glutathione peroxidase (GPX5) from Sus scrofa (Pig).